The primary structure comprises 606 residues: Gamma-aminobutyric acid receptor subunit beta (606 aa).

An N-terminal signal peptide occupies residues 1–44 (MSDSKMDKLARMAPLPRTPLLTIWLAINMALIAQETGHKRIHTV). Residues 45–268 (QAATGGGSML…CEIQFVRSMG (224 aa)) lie on the Extracellular side of the membrane. N-linked (GlcNAc...) asparagine glycosylation occurs at N58. C185 and C199 are oxidised to a cystine. Residue N253 is glycosylated (N-linked (GlcNAc...) asparagine). The next 3 membrane-spanning stretches (helical) occupy residues 269–291 (YYLI…SFWL), 297–316 (PARV…LMSS), and 333–356 (YLGT…YMAK). The Cytoplasmic portion of the chain corresponds to 357–568 (RIQMRKQRFM…LGITPSDIDK (212 aa)). Disordered regions lie at residues 376–451 (KQQL…VSNR) and 482–542 (HDPK…AAVP). The segment covering 381–395 (GANQQQANPNPNANV) has biased composition (low complexity). A compositionally biased stretch (gly residues) spans 396–425 (GGPGGVGVGPGGPGGPGGGVNVGVGMGMGP). The segment covering 430–443 (GHGHHAHSHGHPHA) has biased composition (basic residues). Over residues 499–536 (GGRGGPQSHGPGPGQGGGPPGGGGGGGGGGGPPEGGGD) the composition is skewed to gly residues. A helical membrane pass occupies residues 569 to 590 (YSRIVFPVCFVCFNLMYWIIYL).

This sequence belongs to the ligand-gated ion channel (TC 1.A.9) family. Gamma-aminobutyric acid receptor (TC 1.A.9.5) subfamily.

It localises to the postsynaptic cell membrane. It is found in the cell membrane. Functionally, GABA, an inhibitory neurotransmitter, mediates neuronal inhibition by binding to the GABA receptor and opening an integral chloride channel. This is Gamma-aminobutyric acid receptor subunit beta (Rdl) from Drosophila simulans (Fruit fly).